Reading from the N-terminus, the 180-residue chain is UPF0227 protein YcfP (180 aa).

Belongs to the UPF0227 family.

This chain is UPF0227 protein YcfP, found in Salmonella choleraesuis (strain SC-B67).